Here is a 524-residue protein sequence, read N- to C-terminus: Cytochrome P450 CYP749A22 (524 aa).

The chain crosses the membrane as a helical span at residues 12 to 32; that stretch reads TPILFQFLLSSLCVFLLFVFI. Position 472 (Cys-472) interacts with heme.

It belongs to the cytochrome P450 family. The cofactor is heme.

The protein localises to the membrane. Functionally, probable heme-thiolate monooxygenase. The sequence is that of Cytochrome P450 CYP749A22 from Panax ginseng (Korean ginseng).